Reading from the N-terminus, the 438-residue chain is MQVTVEKKEGIHCSLLIEVPANEIDSVVSKEINRTAKTIKMDGFRPGKVPAGMVKKKYGEQIRMEVISDLIPQKYSKAIQDEKLAVAGIEVELKENKEGQPLKFVANLELFPEFEVTGFEKIEVQKPVVELTDKEVKQMIENLRKQFATFSEVDKAVEKDDKVTIDFVGKKDGEAFEGGTANDTDVIIGSGQMIPGFEDGIIGMKKGEQKTITVTFPQDYQNKDLAGAETTFDITVKKIQQAELPEVNDEFVKKFGVKGGVDTFENEIKENMQRELKFILQRKVKDQVFKGLREIAEFETPKSLIKREIDAAKQNLLKQMGGAKGFDVNQLPDNLFEANAKQKVETSLILDSIMNSQEFKAEEAEVESLLDELVQAYEEPEKTKEQIKKNDKEMANLKALVIENKLTDWVLEQAKVTEKTEDFFEVIKENMQAQQAGF.

The 86-residue stretch at 160-245 folds into the PPIase FKBP-type domain; the sequence is DDKVTIDFVG…VKKIQQAELP (86 aa).

The protein belongs to the FKBP-type PPIase family. Tig subfamily.

It is found in the cytoplasm. The enzyme catalyses [protein]-peptidylproline (omega=180) = [protein]-peptidylproline (omega=0). Functionally, involved in protein export. Acts as a chaperone by maintaining the newly synthesized protein in an open conformation. Functions as a peptidyl-prolyl cis-trans isomerase. In Francisella tularensis subsp. novicida (strain U112), this protein is Trigger factor.